A 319-amino-acid polypeptide reads, in one-letter code: Cytochrome f (319 aa).

An N-terminal signal peptide occupies residues 1 to 35; it reads METRNIFSWIKEQITRSISVSLMIYIITRTAVSNA. Positions 36, 56, 59, and 60 each coordinate heme. A helical membrane pass occupies residues 285–305; it reads VQGLLFFLASVILAQIFLVLK.

This sequence belongs to the cytochrome f family. In terms of assembly, the 4 large subunits of the cytochrome b6-f complex are cytochrome b6, subunit IV (17 kDa polypeptide, petD), cytochrome f and the Rieske protein, while the 4 small subunits are PetG, PetL, PetM and PetN. The complex functions as a dimer. The cofactor is heme.

It is found in the plastid. It localises to the chloroplast thylakoid membrane. Its function is as follows. Component of the cytochrome b6-f complex, which mediates electron transfer between photosystem II (PSII) and photosystem I (PSI), cyclic electron flow around PSI, and state transitions. The chain is Cytochrome f from Coffea arabica (Arabian coffee).